The primary structure comprises 113 residues: Large ribosomal subunit protein bL19 (113 aa).

This sequence belongs to the bacterial ribosomal protein bL19 family.

In terms of biological role, this protein is located at the 30S-50S ribosomal subunit interface and may play a role in the structure and function of the aminoacyl-tRNA binding site. The protein is Large ribosomal subunit protein bL19 of Nocardia farcinica (strain IFM 10152).